Here is a 79-residue protein sequence, read N- to C-terminus: Small ribosomal subunit protein bS18 (79 aa).

This sequence belongs to the bacterial ribosomal protein bS18 family. Part of the 30S ribosomal subunit. Forms a tight heterodimer with protein bS6.

Functionally, binds as a heterodimer with protein bS6 to the central domain of the 16S rRNA, where it helps stabilize the platform of the 30S subunit. The protein is Small ribosomal subunit protein bS18 of Micrococcus luteus (strain ATCC 4698 / DSM 20030 / JCM 1464 / CCM 169 / CCUG 5858 / IAM 1056 / NBRC 3333 / NCIMB 9278 / NCTC 2665 / VKM Ac-2230) (Micrococcus lysodeikticus).